The primary structure comprises 248 residues: Ubiquinone biosynthesis O-methyltransferase (248 aa).

S-adenosyl-L-methionine is bound by residues arginine 41, glycine 72, aspartate 93, and methionine 136.

This sequence belongs to the methyltransferase superfamily. UbiG/COQ3 family.

It carries out the reaction a 3-demethylubiquinol + S-adenosyl-L-methionine = a ubiquinol + S-adenosyl-L-homocysteine + H(+). The catalysed reaction is a 3-(all-trans-polyprenyl)benzene-1,2-diol + S-adenosyl-L-methionine = a 2-methoxy-6-(all-trans-polyprenyl)phenol + S-adenosyl-L-homocysteine + H(+). Its pathway is cofactor biosynthesis; ubiquinone biosynthesis. Functionally, O-methyltransferase that catalyzes the 2 O-methylation steps in the ubiquinone biosynthetic pathway. The sequence is that of Ubiquinone biosynthesis O-methyltransferase from Rhizobium johnstonii (strain DSM 114642 / LMG 32736 / 3841) (Rhizobium leguminosarum bv. viciae).